Here is a 625-residue protein sequence, read N- to C-terminus: Somatic embryogenesis receptor kinase 1 (625 aa).

The signal sequence occupies residues 1-26 (MESSYVVFILLSLILLPNHSLWLASA). At 27 to 238 (NLEGDALHTL…STPSGYGITG (212 aa)) the chain is on the extracellular side. An intrachain disulfide couples cysteine 58 to cysteine 65. 2 leucine-rich repeat receptor-like protein kinase binding regions span residues 59 to 78 (TWFH…DLGN) and 97 to 102 (YLELYS). 61–62 (FH) is a brassinolide binding site. LRR repeat units follow at residues 92-116 (LKNL…LGNL), 118-140 (NLVS…LGKL), 141-164 (SKLR…LTNI), and 165-189 (TTLQ…SFSL). 2 N-linked (GlcNAc...) asparagine glycosylation sites follow: asparagine 104 and asparagine 115. 2 leucine-rich repeat receptor-like protein kinase binding regions span residues 123-126 (DLYL) and 145-147 (FLR). N-linked (GlcNAc...) asparagine glycosylation is found at asparagine 150, asparagine 163, and asparagine 184. A leucine-rich repeat receptor-like protein kinase binding region spans residues 171–194 (DLSNNRLSGSVPDNGSFSLFTPIS). The cysteines at positions 202 and 210 are disulfide-linked. A helical transmembrane segment spans residues 239-259 (AIAGGVAAGAALLFAAPAIAF). The Cytoplasmic segment spans residues 260–625 (AWWRRRKPLD…LHAVELSGPR (366 aa)). Phosphoserine occurs at positions 291, 299, and 303. In terms of domain architecture, Protein kinase spans 302 to 589 (FSNKNILGRG…GLAEKWDEWQ (288 aa)). 308–316 (LGRGGFGKV) contacts ATP. The residue at position 325 (threonine 325) is a Phosphothreonine. Lysine 330 provides a ligand contact to ATP. Threonine 337 and threonine 346 each carry phosphothreonine. Serine 352, serine 383, serine 386, and serine 394 each carry phosphoserine. The residue at position 402 (threonine 402) is a Phosphothreonine. Residue serine 415 is modified to Phosphoserine. The Proton acceptor role is filled by aspartate 429. A Phosphotyrosine modification is found at tyrosine 456. Threonine 459, threonine 462, threonine 463, and threonine 468 each carry phosphothreonine. Residue tyrosine 476 is modified to Phosphotyrosine. Phosphoserine is present on serine 478. Phosphothreonine is present on threonine 479. The residue at position 483 (serine 483) is a Phosphoserine. Threonine 541 is modified (phosphothreonine). Residue tyrosine 543 is modified to Phosphotyrosine. Threonine 559 carries the post-translational modification Phosphothreonine. A phosphoserine mark is found at serine 606 and serine 612. The residue at position 613 (threonine 613) is a Phosphothreonine. A Phosphotyrosine modification is found at tyrosine 614. Serine 622 carries the post-translational modification Phosphoserine.

It belongs to the protein kinase superfamily. Ser/Thr protein kinase family. Monomer, homo- and heterodimer. Interacts with KAPP, CDC48A, GRF6 or GRF7, SERK2, BRI1 and SERK3/BAK1 to form the SERK1 signaling complex. Bind to BRI1 in a brassinolide-dependent manner. Heterodimer with PSKR1. Interacts with the EF-Tu receptor EFR and FLS2 in a specific ligand-induced manner. Interacts with ERECTA in a EPF2-induced manner. Interacts with ERL1 in a EPF1-induced manner. Interacts with TMM. In the presence of the signal peptide RGF1, interacts with RGI1/RGFR4/RCH2, RGI2/RGFR3/RCH1, RGI3/RGFR1, RGI4/RGFR2/SKM2 and RGI5/RGFR5. Mg(2+) serves as cofactor. Post-translationally, glycosylated. Important for targeting to the plasma membrane. Intermolecular autophosphorylation. The catalytic activity of SERK1 depends on the presence of a phosphorylated Thr residue in SERK1. The phosphorylation is induced by brassinosteroids. Transphosphorylation by BRI1 occurs only on Ser-299 and Thr-462. Dephosphorylation of threonine residues by the kinase-associated protein phosphatase (KAPP) is involved in SERK1 endocytosis. As to expression, expressed in flowers, tapetum, developing microspores, all cells of the embryo sac, provascular strands and developing vascular bundles. Low expression in adult vascular tissue. Detected in root meristem.

The protein resides in the cell membrane. It is found in the endoplasmic reticulum membrane. It carries out the reaction L-seryl-[protein] + ATP = O-phospho-L-seryl-[protein] + ADP + H(+). It catalyses the reaction L-threonyl-[protein] + ATP = O-phospho-L-threonyl-[protein] + ADP + H(+). The enzyme catalyses L-tyrosyl-[protein] + ATP = O-phospho-L-tyrosyl-[protein] + ADP + H(+). Its activity is regulated as follows. Inhibited by manganese. Functionally, dual specificity kinase acting on both serine/threonine- and tyrosine-containing substrates. Phosphorylates BRI1 on 'Ser-887' and CDC48 on at least one threonine residue and on 'Ser-41'. Confers embryogenic competence. Acts redundantly with SERK2 as a control point for sporophytic development controlling male gametophyte production. Involved in the brassinolide signaling pathway. Probably required during small peptide (e.g. RGF1) signaling. Involved in the perception of phytosulfokine and subsequent signal transduction. Acts as a RLK5 coreceptor and promotes high-affinity IDA sensing, thus being a positive regulator of floral abscission. In Arabidopsis thaliana (Mouse-ear cress), this protein is Somatic embryogenesis receptor kinase 1.